The chain runs to 552 residues: Mothers against decapentaplegic homolog 4 (552 aa).

Residues 1 to 322 (MDNMSITNTP…PISNHPAPEY (322 aa)) form a mediates interaction with ZBTB7A region. The 125-residue stretch at 18 to 142 (SIVHSLMCHR…YERVVSPGID (125 aa)) folds into the MH1 domain. Residue Lys37 is modified to N6-acetyllysine. Positions 44-69 (VKKLKEKKDELDSLITAITTNGAHPS) are required for interaction with TSC22D1. Cys71 is a binding site for Zn(2+). Lys113 participates in a covalent cross-link: Glycyl lysine isopeptide (Lys-Gly) (interchain with G-Cter in SUMO2). Zn(2+)-binding residues include Cys115, Cys127, and His132. Disordered stretches follow at residues 168 to 194 (GQPSLSTEGHSIQTIQHPPSNRASTET) and 236 to 256 (GLLQIASGPQPGQQQNGFTGQ). Composition is skewed to polar residues over residues 170-194 (PSLSTEGHSIQTIQHPPSNRASTET) and 245-256 (QPGQQQNGFTGQ). An SAD region spans residues 275–320 (PYTPNLPHHQNGHLQHHPPMPPHPGHYWPVHNELAFQPPISNHPAP). One can recognise an MH2 domain in the interval 323–552 (WCSIAYFEMD…MPIADPQPLD (230 aa)). N6-acetyllysine occurs at positions 428 and 507. Lys519 is covalently cross-linked (Glycyl lysine isopeptide (Lys-Gly) (interchain with G-Cter in ubiquitin)).

The protein belongs to the dwarfin/SMAD family. Monomer; in the absence of TGF-beta activation. Heterotrimer; on TGF-beta activation. Heterotrimer composed of two molecules of a C-terminally phosphorylated R-SMAD molecule, SMAD2 or SMAD3, and one molecule of SMAD4 to form the transcriptional active SMAD2/SMAD3-SMAD4 complex. Found in a ternary complex composed of SMAD4, STK11/LKB1 and STK11IP. Found in a complex with SMAD1 and YY1. Identified in a complex that contains at least ZNF451, SMAD2, SMAD3 and SMAD4. Interacts with ATF2, COPS5, DACH1, MSG1, SKI, STK11/LKB1, STK11IP and TRIM33. Associates with ZNF423 or ZNF521 in response to BMP2 leading to activate transcription of BMP target genes. Interacts with USP9X. Interacts (via the MH1 and MH2 domains) with RBPMS. Interacts with WWTR1 (via coiled-coil domain). Interacts with CITED1 and CITED2. Interacts with PDPK1 (via PH domain). Interacts with VPS39; this interaction affects heterodimer formation with SMAD3, but not with SMAD2, and leads to inhibition of SMAD3-dependent transcription activation. Interactions with VPS39 and SMAD2 may be mutually exclusive. Interacts (via MH2 domain) with ZNF451 (via N-terminal zinc-finger domains). Interacts with ZC3H3. Interacts weakly with ZNF8. Interacts with NUP93 and IPO7; translocates SMAD4 to the nucleus through the NPC upon BMP7 stimulation resulting in activation of SMAD4 signaling. Interacts with CREB3L1, the interaction takes place upon TGFB1 induction and SMAD4 acts as a CREB3L1 coactivator to induce the expression of genes involved in the assembly of collagen extracellular matrix. Interacts with DLX1. Interacts with ZBTB7A; the interaction is direct and stimulated by TGFB1. Interacts with CREBBP; the recruitment of this transcriptional coactivator is negatively regulated by ZBTB7A. Interacts with EP300; the interaction with this transcriptional coactivator is negatively regulated by ZBTB7A. Interacts with HDAC1. Interacts (via MH2 domain) with ZMIZ1 (via SP-RING-type domain); in the TGF-beta signaling pathway increases the activity of the SMAD3/SMAD4 transcriptional complex. Interacts (via N-terminus) with TSC22D1. Post-translationally, phosphorylated by PDPK1. In terms of processing, monoubiquitinated on Lys-519 by E3 ubiquitin-protein ligase TRIM33. Monoubiquitination hampers its ability to form a stable complex with activated SMAD2/3 resulting in inhibition of TGF-beta/BMP signaling cascade. Deubiquitination by USP9X restores its competence to mediate TGF-beta signaling.

The protein localises to the cytoplasm. It localises to the nucleus. In terms of biological role, in muscle physiology, plays a central role in the balance between atrophy and hypertrophy. When recruited by MSTN, promotes atrophy response via phosphorylated SMAD2/4. MSTN decrease causes SMAD4 release and subsequent recruitment by the BMP pathway to promote hypertrophy via phosphorylated SMAD1/5/8. Acts synergistically with SMAD1 and YY1 in bone morphogenetic protein (BMP)-mediated cardiac-specific gene expression. Binds to SMAD binding elements (SBEs) (5'-GTCT/AGAC-3') within BMP response element (BMPRE) of cardiac activating regions. Common SMAD (co-SMAD) is the coactivator and mediator of signal transduction by TGF-beta (transforming growth factor). Component of the heterotrimeric SMAD2/SMAD3-SMAD4 complex that forms in the nucleus and is required for the TGF-mediated signaling. Promotes binding of the SMAD2/SMAD4/FAST-1 complex to DNA and provides an activation function required for SMAD1 or SMAD2 to stimulate transcription. Component of the multimeric SMAD3/SMAD4/JUN/FOS complex which forms at the AP1 promoter site; required for synergistic transcriptional activity in response to TGF-beta. May act as a tumor suppressor. Positively regulates PDPK1 kinase activity by stimulating its dissociation from the 14-3-3 protein YWHAQ which acts as a negative regulator. In Homo sapiens (Human), this protein is Mothers against decapentaplegic homolog 4 (SMAD4).